Consider the following 234-residue polypeptide: Golgi SNAP receptor complex member 1 (234 aa).

Residues 1–212 (MSETWEALRK…MQKIKTKKQK (212 aa)) lie on the Cytoplasmic side of the membrane. Residues 54-121 (VTTEIEGLIE…RDNVDQVLQR (68 aa)) adopt a coiled-coil conformation. The helical; Anchor for type IV membrane protein transmembrane segment at 213–233 (NTLILAAVISSCLIFTIFWII) threads the bilayer. Asn-234 is a topological domain (vesicular).

This sequence belongs to the GOSR1 family. Component of several multiprotein Golgi SNARE complexes.

Its subcellular location is the golgi apparatus membrane. Involved in transport from the ER to the Golgi apparatus as well as in intra-Golgi transport. It belongs to a super-family of proteins called t-SNAREs or soluble NSF (N-ethylmaleimide-sensitive factor) attachment protein receptor. Cooperates with ykt-6 for proper expression of Golgi-resident proteins. Required along with ykt-6 for normal embryonic development, seam cell division or differentiation, and ray formation. The protein is Golgi SNAP receptor complex member 1 (gos-28) of Caenorhabditis elegans.